A 180-amino-acid polypeptide reads, in one-letter code: Protein NEQ441 (180 aa).

The region spanning 1–180 is the AMMECR1 domain; it reads MNLAKIARKI…VFEGQIFEED (180 aa).

In Nanoarchaeum equitans (strain Kin4-M), this protein is Protein NEQ441.